We begin with the raw amino-acid sequence, 560 residues long: MGICSSSCCGGKSRDALYENVLAENEREAVADLLQYLENRAETDFFSGEPLRALSTLVYSDNIDLQRSASLTFAEITERDVRAVDRDTLGPILFLLENSDIEVQRAASAALGNLAVNTDNKVLIVQLGGLQPLIKQMMSPNVEVQCNAVGCITNLATHEENKAKIARSGALGPLTRLAKSKDMRVQRNATGALLNMTHSDENRQQLVNAGAIPVLVQLLSSSDVDVQYYCTTALSNIAVDANNRRKLAETEQRLVQYLVNLTESSSPKVQCQAALALRNLASDEKYQLEIVQAHGLGPLLRLLRSSYLPLILSAVACIRNISIHPQNESPIIEAGFLKPLVDLLGSTDNEEIQCHAISTLRNLAASSDRNKSLVLEAGAVQKCKQLVLEVPVTVQSEMTAAIAVLALSDELKTHLLELGVFDVLIPLTMSPSVEVQGNSAAALGNLSSKVGDYSIFVQNWMEPRDGIHGYLNRFLASGDATFQHIAIWTLLQLLESEDKKLIGLIGKSDGVVDMIKQIANRQMMESDNEAEDDDEGEVVNLAQRCLELLGQGGSKSHIEG.

Gly2 carries the N-myristoyl glycine lipid modification. The S-palmitoyl cysteine moiety is linked to residue Cys4. ARM repeat units follow at residues 39 to 76 (NRAE…FAEI), 77 to 116 (TERD…NLAV), 118 to 157 (TDNK…NLAT), 159 to 198 (EENK…NMTH), 200 to 239 (DENR…NIAV), 243 to 282 (NRRK…NLAS), 284 to 323 (EKYQ…NISI), 325 to 365 (PQNE…NLAA), and 409 to 448 (DELK…NLSS).

The protein belongs to the beta-catenin family.

It is found in the vacuole membrane. Functions in both vacuole inheritance and protein targeting from the cytoplasm to vacuole. This Chaetomium globosum (strain ATCC 6205 / CBS 148.51 / DSM 1962 / NBRC 6347 / NRRL 1970) (Soil fungus) protein is Vacuolar protein 8 (VAC8).